Here is a 245-residue protein sequence, read N- to C-terminus: DNA repair protein RecO (245 aa).

It belongs to the RecO family.

Its function is as follows. Involved in DNA repair and RecF pathway recombination. The protein is DNA repair protein RecO of Klebsiella pneumoniae (strain 342).